The following is a 204-amino-acid chain: Inactive ribonuclease-like protein 9 (204 aa).

Positions 1-26 (MMRTLITTHPLLLLLLLQQLLQPVQF) are cleaved as a signal peptide. Intrachain disulfides connect Cys97–Cys152, Cys115–Cys167, and Cys122–Cys129. Residues Asn130 and Asn142 are each glycosylated (N-linked (GlcNAc...) asparagine).

This sequence belongs to the pancreatic ribonuclease family.

The protein localises to the secreted. In terms of biological role, does not exhibit any ribonuclease activity. The polypeptide is Inactive ribonuclease-like protein 9 (RNASE9) (Macaca mulatta (Rhesus macaque)).